Consider the following 1252-residue polypeptide: Plasma membrane calcium-transporting ATPase mca-1 (1252 aa).

Residues 1 to 121 (MQKSQNVTAV…VRLVLDACKD (121 aa)) are Cytoplasmic-facing. Residues 122 to 142 (PTLVILVLSGFINLALSFYEP) traverse the membrane as a helical segment. The Extracellular segment spans residues 143-180 (TSAAEDATQHLVNATTAAILANGTFMSTTEAPSEGHGT). N-linked (GlcNAc...) asparagine glycans are attached at residues Asn-155 and Asn-164. A helical membrane pass occupies residues 181–201 (AWIEGVAILLCVIVVVLVTAV). At 202–376 (NDYSKERQFR…KSVLQAKLSK (175 aa)) the chain is on the cytoplasmic side. The segment at 330 to 361 (DDSTSTSSSSSSSSSSSGSSSNGSSDSSKSGD) is disordered. A compositionally biased stretch (low complexity) spans 333 to 357 (TSTSSSSSSSSSSSGSSSNGSSDSS). The helical transmembrane segment at 377 to 397 (LALQIIYCGTTIAIIALIVLV) threads the bilayer. Residues 398 to 422 (TRFCLDHYVFEKNEFSLVDIQMFVK) are Extracellular-facing. The helical transmembrane segment at 423–443 (FFIIAVTILVISIPEGLPLAI) threads the bilayer. Val-432, Ile-435, and Glu-437 together coordinate Ca(2+). At 444–879 (ALALTYSVRK…GRNVYDSISK (436 aa)) the chain is on the cytoplasmic side. Asp-479 acts as the 4-aspartylphosphate intermediate in catalysis. 2 residues coordinate Mg(2+): Asp-479 and Thr-481. Thr-481, Glu-553, Lys-612, Thr-733, Gly-734, Asp-735, Arg-792, and Lys-798 together coordinate ATP. A Mg(2+)-binding site is contributed by Asp-822. Asn-825 contacts ATP. A helical transmembrane segment spans residues 880 to 900 (FLQFQLTVNVVAVITAFVGAV). Asn-888 serves as a coordination point for Ca(2+). Topologically, residues 901–908 (TVSDSPLK) are extracellular. Residues 909–929 (AVHMLWINLIMDTLASLALAT) traverse the membrane as a helical segment. The Ca(2+) site is built by Asn-916 and Asp-920. Over 930–960 (EQPTDELLERKPYGRKKSLISRTMVKNILCH) the chain is Cytoplasmic. Residues 961-981 (ALYQLIIIFVIFFYGDTIFGI) form a helical membrane-spanning segment. Residues 982 to 989 (KTGLYAPL) lie on the Extracellular side of the membrane. The helical transmembrane segment at 990–1010 (FAPPSQHFTLVFNAFVMMTVF) threads the bilayer. Residues 1011–1035 (NEINARKVHGERNVFKGLASNRVFC) are Cytoplasmic-facing. A helical membrane pass occupies residues 1036 to 1056 (VIWVTTFIAQIIIVQFGGAWF). The Extracellular segment spans residues 1057-1065 (STAPLTLQQ). The chain crosses the membrane as a helical span at residues 1066 to 1086 (WIVCLVLGFSTLIWGQIVATI). At 1087-1252 (PSKKLPKAWK…NVDMEDIELN (166 aa)) the chain is on the cytoplasmic side. A calmodulin-binding subdomain A region spans residues 1124-1142 (LRRSGKSLWVRGMFIIGNH). The tract at residues 1143 to 1152 (LRVLRAFGME) is calmodulin-binding subdomain B. The disordered stretch occupies residues 1181–1252 (YRHQKHQEKK…NVDMEDIELN (72 aa)).

This sequence belongs to the cation transport ATPase (P-type) (TC 3.A.3) family. Type IIB subfamily. Interacts with calmodulin.

The protein resides in the cell membrane. The catalysed reaction is Ca(2+)(in) + ATP + H2O = Ca(2+)(out) + ADP + phosphate + H(+). Functionally, catalyzes the hydrolysis of ATP coupled with the transport of calcium across a membrane. This is Plasma membrane calcium-transporting ATPase mca-1 from Caenorhabditis elegans.